The following is a 457-amino-acid chain: Argininosuccinate lyase (457 aa).

It belongs to the lyase 1 family. Argininosuccinate lyase subfamily.

Its subcellular location is the cytoplasm. It catalyses the reaction 2-(N(omega)-L-arginino)succinate = fumarate + L-arginine. Its pathway is amino-acid biosynthesis; L-arginine biosynthesis; L-arginine from L-ornithine and carbamoyl phosphate: step 3/3. The protein is Argininosuccinate lyase of Haemophilus influenzae (strain PittGG).